A 468-amino-acid chain; its full sequence is MGTGNSKENWRQSSFRSTSASSASPSSSSWASQQSYPQYGAESYNYPPPPSYAQPPEYTQPPPPLYSTQPYSAPSYSAPPSQSYGSDNKKRLERKYSKISDDYSSLEQVTEALARAGLESSNLIVGIDFTKSNEWTGARSFNRKSLHFIGSSPNPYEQAITIIGRTLAAFDEDNLIPCYGFGDASTHDQDVFSFNSEDRFCNGFEEVLSRYKEIVPQLKLAGPTSFAPIIDMAMTIVEQSGGQYHVLVIIADGQVTRSVDTENGQLSPQEQKTVDAIVQASKLPLSIVLVGVGDGPWDMMREFDDNIPARAFDNFQFVNFTEIMAKNKAQSLKETEFALSALMEIPQQYKATIELNLLGRRNGYIPERFPLPPPMRGGSSSYNSPKPSRLPSFKPSVPPHPTEGYHVRSSPVPPPTSSASDNQLCPICLSNPKDMAFGCGHQTCCECGPDLQMCPICRAPIQTRIKLY.

Positions 1-89 are disordered; the sequence is MGTGNSKENW…PSQSYGSDNK (89 aa). Gly-2 is lipidated: N-myristoyl glycine. Over residues 12–45 the composition is skewed to low complexity; sequence QSSFRSTSASSASPSSSSWASQQSYPQYGAESYN. The segment covering 46–65 has biased composition (pro residues); it reads YPPPPSYAQPPEYTQPPPPL. Over residues 66 to 84 the composition is skewed to low complexity; it reads YSTQPYSAPSYSAPPSQSY. One can recognise a VWFA domain in the interval 122–342; that stretch reads NLIVGIDFTK…KETEFALSAL (221 aa). The segment at 369–416 is disordered; that stretch reads FPLPPPMRGGSSSYNSPKPSRLPSFKPSVPPHPTEGYHVRSSPVPPPT. The segment at 425–458 adopts an RING-type zinc-finger fold; it reads CPICLSNPKDMAFGCGHQTCCECGPDLQMCPICR.

In terms of assembly, interacts with the heterodimer UBC35/UEV1B, UBC35 alone, PIN1, but not with UCB2, UCB9, UEV1B or UEV1C alone. Interacts with ERF053. Post-translationally, N-myristoylated. In terms of tissue distribution, ubiquitously expressed.

It localises to the cell membrane. Its subcellular location is the nucleus. It catalyses the reaction S-ubiquitinyl-[E2 ubiquitin-conjugating enzyme]-L-cysteine + [acceptor protein]-L-lysine = [E2 ubiquitin-conjugating enzyme]-L-cysteine + N(6)-ubiquitinyl-[acceptor protein]-L-lysine.. In terms of biological role, E3 ubiquitin-protein ligase that mediates the formation of 'Lys-63'-linked ubiquitin chains. Regulates apical dominance by acting on the auxin transport proteins abundance. Mediates ubiquitination and subsequent proteasomal degradation of ERF053 in response to drought stress. Acts as a negative regulator of drought stress response. The sequence is that of E3 ubiquitin-protein ligase RGLG2 from Arabidopsis thaliana (Mouse-ear cress).